The sequence spans 640 residues: Guanylate-binding protein 4 (640 aa).

Residues 1–325 (MGERTLHAAV…DAINSGAVPC (325 aa)) are GTPase domain (Globular). The GB1/RHD3-type G domain maps to 50 to 292 (SQPVVVVAIV…FCSYIFTHAK (243 aa)). Residues 60–67 (GLYRTGKS), 82–84 (LGS), and 112–116 (DTEGL) each bind GTP. Positions 499-612 (GEKAIAAERA…EQLRLLKILD (114 aa)) form a coiled coil.

Belongs to the TRAFAC class dynamin-like GTPase superfamily. GB1/RHD3 GTPase family. GB1 subfamily. Heterodimer with other family members, including GBP1, GBP2 and GBP5. Dimerization regulates subcellular location. Interacts with IRF7; preventing interaction between TRAF6 and IRF7, resulting in impaired TRAF6-mediated IRF7 ubiquitination. Post-translationally, (Microbial infection) Ubiquitinated by S.flexneri IpaH9.8, leading to its degradation by the proteasome, thereby preventing its ability to promote host defense against bacterial infection.

It is found in the golgi apparatus membrane. The protein localises to the cytoplasm. The protein resides in the nucleus. Its subcellular location is the perinuclear region. The enzyme catalyses GTP + H2O = GDP + phosphate + H(+). Interferon (IFN)-inducible GTPase that plays important roles in innate immunity against a diverse range of bacterial, viral and protozoan pathogens. Negatively regulates the antiviral response by inhibiting activation of IRF7 transcription factor. The sequence is that of Guanylate-binding protein 4 from Homo sapiens (Human).